A 278-amino-acid polypeptide reads, in one-letter code: Small ribosomal subunit protein uS3 (278 aa).

The KH type-2 domain occupies 38–106 (IRKLLATGLE…QVQLNILEVK (69 aa)). Residues 215-278 (AAAAPAGADR…AAGQPETTES (64 aa)) form a disordered region. The span at 238 to 278 (SGASGTTATSTDAGRAATEEAPATDAAATAPAAGQPETTES) shows a compositional bias: low complexity.

This sequence belongs to the universal ribosomal protein uS3 family. As to quaternary structure, part of the 30S ribosomal subunit. Forms a tight complex with proteins S10 and S14.

Functionally, binds the lower part of the 30S subunit head. Binds mRNA in the 70S ribosome, positioning it for translation. In Mycolicibacterium gilvum (strain PYR-GCK) (Mycobacterium gilvum (strain PYR-GCK)), this protein is Small ribosomal subunit protein uS3.